A 207-amino-acid chain; its full sequence is Thiamine-phosphate synthase (207 aa).

4-amino-2-methyl-5-(diphosphooxymethyl)pyrimidine-binding positions include 35 to 39 and N67; that span reads QYRDK. The Mg(2+) site is built by D68 and D86. T105 is a binding site for 4-amino-2-methyl-5-(diphosphooxymethyl)pyrimidine. Residue 132–134 participates in 2-[(2R,5Z)-2-carboxy-4-methylthiazol-5(2H)-ylidene]ethyl phosphate binding; it reads SVT. 4-amino-2-methyl-5-(diphosphooxymethyl)pyrimidine is bound at residue K135. Position 162 (G162) interacts with 2-[(2R,5Z)-2-carboxy-4-methylthiazol-5(2H)-ylidene]ethyl phosphate.

The protein belongs to the thiamine-phosphate synthase family. Mg(2+) serves as cofactor.

The enzyme catalyses 2-[(2R,5Z)-2-carboxy-4-methylthiazol-5(2H)-ylidene]ethyl phosphate + 4-amino-2-methyl-5-(diphosphooxymethyl)pyrimidine + 2 H(+) = thiamine phosphate + CO2 + diphosphate. It catalyses the reaction 2-(2-carboxy-4-methylthiazol-5-yl)ethyl phosphate + 4-amino-2-methyl-5-(diphosphooxymethyl)pyrimidine + 2 H(+) = thiamine phosphate + CO2 + diphosphate. It carries out the reaction 4-methyl-5-(2-phosphooxyethyl)-thiazole + 4-amino-2-methyl-5-(diphosphooxymethyl)pyrimidine + H(+) = thiamine phosphate + diphosphate. It functions in the pathway cofactor biosynthesis; thiamine diphosphate biosynthesis; thiamine phosphate from 4-amino-2-methyl-5-diphosphomethylpyrimidine and 4-methyl-5-(2-phosphoethyl)-thiazole: step 1/1. Functionally, condenses 4-methyl-5-(beta-hydroxyethyl)thiazole monophosphate (THZ-P) and 2-methyl-4-amino-5-hydroxymethyl pyrimidine pyrophosphate (HMP-PP) to form thiamine monophosphate (TMP). The chain is Thiamine-phosphate synthase from Pseudomonas putida (strain W619).